A 1107-amino-acid chain; its full sequence is Miniconductance mechanosensitive channel MscM (1107 aa).

Residues 1-19 (MRLIITFLMAWCLSWGAYA) form the signal peptide. The next 11 helical transmembrane spans lie at 467 to 487 (VMML…ILVG), 522 to 542 (LFWS…LGYG), 551 to 571 (LAVA…VVMI), 600 to 620 (YLMS…FDNL), 628 to 648 (SLGR…TLSL), 674 to 694 (MMIG…LATA), 698 to 718 (LARL…YHVI), 785 to 805 (ILML…HSAF), 828 to 848 (PITL…TQLV), 875 to 895 (TITK…MIGI), and 910 to 930 (GLGF…IILF).

This sequence belongs to the MscS (TC 1.A.23) family. As to quaternary structure, homoheptamer.

The protein localises to the cell inner membrane. Functionally, mechanosensitive channel that protects cells against hypoosmotic stress when highly overexpressed. Gates spontaneously in response to increased membrane tension. The polypeptide is Miniconductance mechanosensitive channel MscM (mscM) (Escherichia coli (strain K12)).